The following is a 388-amino-acid chain: Mannitol-1-phosphate 5-dehydrogenase (388 aa).

Residue 4-15 participates in NAD(+) binding; it reads AVHFGAGNIGRG.

Belongs to the mannitol dehydrogenase family.

The enzyme catalyses D-mannitol 1-phosphate + NAD(+) = beta-D-fructose 6-phosphate + NADH + H(+). In Lactococcus lactis subsp. cremoris (strain MG1363), this protein is Mannitol-1-phosphate 5-dehydrogenase.